The following is a 1147-amino-acid chain: Myosin light chain kinase, smooth muscle (1147 aa).

Residues 1-41 (MDFRANLQRQVKPKTVSEEERKVHSPQQVDFRSVLAKKGTP) form an actin-binding region. Positions 1–330 (MDFRANLQRQ…PPASPGTAPT (330 aa)) are disordered. Residues 26–41 (PQQVDFRSVLAKKGTP) are calmodulin-binding. Over residues 43–55 (TPVPEKAPPPKPA) the composition is skewed to pro residues. 2 tandem repeats follow at residues 100-111 (SLKPVANAKPAE) and 112-123 (TLKPVANTKPAE). Positions 100 to 288 (SLKPVANAKP…KAVANAKPAE (189 aa)) are 16 X 12 AA tandem repeats. The 3; truncated repeat unit spans residues 124–132 (TLKPVANAE). Repeat copies occupy residues 133–144 (TLKPMGNAKPAE), 145–156 (SSKPVGNTKPAE), 157–168 (TLKPVGNTKPAE), 169–180 (TLKPVGNIKPAE), 181–192 (TLKPVGNIKPAE), 193–204 (TLKPVGNTKPTE), 205–216 (TLKPVANAKSAE), 217–228 (TLKPIANTKPAE), 229–240 (TLKPVGNAKPAE), 241–252 (TLKPVGNAKPAE), 253–264 (TLKPVGNAKPAE), 265–276 (TLKPVGNAKPAE), and 277–288 (TLKAVANAKPAE). Positions 292-692 (PAGKEELKKE…TVTVNTEQKV (401 aa)) are actin-binding (calcium/calmodulin-insensitive). The segment covering 293–320 (AGKEELKKEVQNDVNCKREKAGAADNEK) has biased composition (basic and acidic residues). Ig-like C2-type domains lie at 329–417 (PTFK…CHVT) and 469–557 (PQIP…VNLT). Cysteines 350 and 401 form a disulfide. 2 disordered regions span residues 424–476 (SENA…QFPE) and 644–678 (SEPSQESELTTVGEKPEEPKDEVEEVSDDDEKEPE). Residues 459–472 (PKTPPKAATPPQIP) show a composition bias toward pro residues. Residues 565–657 (PAGTPCASDI…QESELTTVGE (93 aa)) form the Fibronectin type-III domain. The span at 644-653 (SEPSQESELT) shows a compositional bias: polar residues. The span at 662–677 (PKDEVEEVSDDDEKEP) shows a compositional bias: acidic residues. Ser-670 is subject to Phosphoserine. Tyr-681 carries the phosphotyrosine; by ABL1 modification. One can recognise a Protein kinase domain in the interval 696–951 (YDIEERLGSG…CTQCLQHPWL (256 aa)). ATP-binding positions include 702-710 (LGSGKFGQV) and Lys-725. At Tyr-807 the chain carries Phosphotyrosine; by ABL1. The active-site Proton acceptor is Asp-817. Tyr-867 carries the phosphotyrosine; by ABL1 modification. The segment at 943–1006 (TQCLQHPWLM…SGLSGRKSST (64 aa)) is calmodulin-binding. A phosphoserine mark is found at Ser-991, Ser-992, Ser-1004, Ser-1005, and Ser-1008. The tract at residues 999–1019 (LSGRKSSTGSPTSPLTAERLE) is disordered. Residues 1002–1013 (RKSSTGSPTSPL) show a composition bias toward polar residues. Thr-1010 bears the Phosphothreonine mark. Phosphoserine is present on Ser-1011. The 90-residue stretch at 1041-1130 (PYFSKTIRDL…GEATCTAELI (90 aa)) folds into the Ig-like C2-type 3 domain. A disulfide bond links Cys-1062 and Cys-1114.

Belongs to the protein kinase superfamily. CAMK Ser/Thr protein kinase family. In terms of assembly, all isoforms including Telokin bind calmodulin. Interacts with SVIL. Interacts with CTTN; this interaction is reduced during thrombin-induced endothelial cell (EC) contraction but is promoted by the barrier-protective agonist sphingosine 1-phosphate (S1P) within lamellipodia. A complex made of ABL1, CTTN and MYLK regulates cortical actin-based cytoskeletal rearrangement critical to sphingosine 1-phosphate (S1P)-mediated endothelial cell (EC) barrier enhancement. Binds to NAA10/ARD1 and PTK2B/PYK2. Mg(2+) serves as cofactor. It depends on Ca(2+) as a cofactor. The C-terminus is deglutamylated by AGTPBP1/CCP1, AGBL1/CCP4 and AGBL4/CCP6, leading to the formation of Myosin light chain kinase, smooth muscle, deglutamylated form. The consequences of C-terminal deglutamylation are unknown. In terms of processing, can probably be down-regulated by phosphorylation. Tyrosine phosphorylation by ABL1 increases kinase activity, reverses MLCK-mediated inhibition of Arp2/3-mediated actin polymerization, and enhances CTTN-binding. Phosphorylation by SRC promotes CTTN binding. In terms of tissue distribution, isoform Telokin is found in all smooth muscle tested except the aorta. It is not present in non-muscle tissue.

The protein resides in the cytoplasm. The protein localises to the cell projection. Its subcellular location is the lamellipodium. It is found in the cleavage furrow. It localises to the cytoskeleton. The protein resides in the stress fiber. It carries out the reaction L-seryl-[myosin light chain] + ATP = O-phospho-L-seryl-[myosin light chain] + ADP + H(+). The catalysed reaction is L-threonyl-[myosin light chain] + ATP = O-phospho-L-threonyl-[myosin light chain] + ADP + H(+). Its activity is regulated as follows. All catalytically active isoforms require binding to calcium and calmodulin for activation. Functionally, calcium/calmodulin-dependent myosin light chain kinase implicated in smooth muscle contraction via phosphorylation of myosin light chains (MLC). Also regulates actin-myosin interaction through a non-kinase activity. Phosphorylates PTK2B/PYK2 and myosin light-chains. Involved in the inflammatory response (e.g. apoptosis, vascular permeability, leukocyte diapedesis), cell motility and morphology, airway hyperreactivity and other activities relevant to asthma. Required for tonic airway smooth muscle contraction that is necessary for physiological and asthmatic airway resistance. Necessary for gastrointestinal motility. Implicated in the regulation of endothelial as well as vascular permeability, probably via the regulation of cytoskeletal rearrangements. In the nervous system it has been shown to control the growth initiation of astrocytic processes in culture and to participate in transmitter release at synapses formed between cultured sympathetic ganglion cells. Critical participant in signaling sequences that result in fibroblast apoptosis. Plays a role in the regulation of epithelial cell survival. Required for epithelial wound healing, especially during actomyosin ring contraction during purse-string wound closure. Mediates RhoA-dependent membrane blebbing. Triggers TRPC5 channel activity in a calcium-dependent signaling, by inducing its subcellular localization at the plasma membrane. Promotes cell migration (including tumor cells) and tumor metastasis. PTK2B/PYK2 activation by phosphorylation mediates ITGB2 activation and is thus essential to trigger neutrophil transmigration during acute lung injury (ALI). May regulate optic nerve head astrocyte migration. Probably involved in mitotic cytoskeletal regulation. Regulates tight junction probably by modulating ZO-1 exchange in the perijunctional actomyosin ring. Mediates burn-induced microvascular barrier injury; triggers endothelial contraction in the development of microvascular hyperpermeability by phosphorylating MLC. Essential for intestinal barrier dysfunction. Mediates Giardia spp.-mediated reduced epithelial barrier function during giardiasis intestinal infection via reorganization of cytoskeletal F-actin and tight junctional ZO-1. Necessary for hypotonicity-induced Ca(2+) entry and subsequent activation of volume-sensitive organic osmolyte/anion channels (VSOAC) in cervical cancer cells. The sequence is that of Myosin light chain kinase, smooth muscle (MYLK) from Oryctolagus cuniculus (Rabbit).